Consider the following 1325-residue polypeptide: Nucleoporin nup146 (1325 aa).

4 disordered regions span residues 1-20, 453-474, 758-951, and 973-994; these read MNAE…AGGS, VRAS…FVKN, GEGL…PKIH, and FPKQ…QESL. Residues 763–778 show a composition bias toward polar residues; it reads QQKTSKALPSTGITKL. Residues 779–791 show a composition bias toward basic and acidic residues; the sequence is SENDNEKAEESNE. Positions 792–801 are enriched in polar residues; the sequence is TKGFNTTIAK. Residues 802–811 are compositionally biased toward basic and acidic residues; it reads QNDKSSKSEG. Polar residues-rich tracts occupy residues 816 to 835 and 850 to 861; these read ANMS…SKPS and FTFNKPSETPPF. The span at 867–881 shows a compositional bias: basic and acidic residues; sequence LVEKESKQDVSDTSD. Residue Thr899 is modified to Phosphothreonine. Acidic residues predominate over residues 927 to 937; that stretch reads SEIEDQDEESS. Thr946 is modified (phosphothreonine). A phosphoserine mark is found at Ser1041, Ser1043, and Ser1044.

It localises to the cytoplasm. The protein localises to the nucleus. Its function is as follows. Functions as a component of the nuclear pore complex (NPC). NPC components, collectively referred to as nucleoporins (NUPs), can play the role of both NPC structural components and of docking or interaction partners for transiently associated nuclear transport factors. Active directional transport is assured by both, a Phe-Gly (FG) repeat affinity gradient for these transport factors across the NPC and a transport cofactor concentration gradient across the nuclear envelope. The chain is Nucleoporin nup146 (nup146) from Schizosaccharomyces pombe (strain 972 / ATCC 24843) (Fission yeast).